A 232-amino-acid chain; its full sequence is Putative membrane protein ORF8 (232 aa).

The span at 71–84 shows a compositional bias: low complexity; it reads GSSAASIPSAPTPD. Residues 71-121 are disordered; sequence GSSAASIPSAPTPDATRESPTGEPHRDRALSTETPTPEPSRDGGSTPEVLH. Transmembrane regions (helical) follow at residues 166-182 and 195-211; these read VFARALAAAEIAIGSVA and LVVTSLVFAGVALWVIV.

The protein localises to the membrane. The sequence is that of Putative membrane protein ORF8 (ORF8) from Ictalurid herpesvirus 1 (strain Auburn) (IcHV-1).